Consider the following 113-residue polypeptide: Large ribosomal subunit protein uL24 (113 aa).

It belongs to the universal ribosomal protein uL24 family. In terms of assembly, part of the 50S ribosomal subunit.

One of two assembly initiator proteins, it binds directly to the 5'-end of the 23S rRNA, where it nucleates assembly of the 50S subunit. In terms of biological role, one of the proteins that surrounds the polypeptide exit tunnel on the outside of the subunit. The sequence is that of Large ribosomal subunit protein uL24 from Synechococcus elongatus (strain ATCC 33912 / PCC 7942 / FACHB-805) (Anacystis nidulans R2).